Reading from the N-terminus, the 858-residue chain is Leucine--tRNA ligase (858 aa).

The 'HIGH' region signature appears at 42–52 (PYPSGRLHMGH). Residues 618-622 (KMSKS) carry the 'KMSKS' region motif. ATP is bound at residue K621.

It belongs to the class-I aminoacyl-tRNA synthetase family.

The protein resides in the cytoplasm. The catalysed reaction is tRNA(Leu) + L-leucine + ATP = L-leucyl-tRNA(Leu) + AMP + diphosphate. This is Leucine--tRNA ligase from Aliivibrio salmonicida (strain LFI1238) (Vibrio salmonicida (strain LFI1238)).